A 156-amino-acid chain; its full sequence is Ribosomal RNA large subunit methyltransferase H (156 aa).

S-adenosyl-L-methionine-binding positions include L73, G104, and L123–L128.

This sequence belongs to the RNA methyltransferase RlmH family. In terms of assembly, homodimer.

Its subcellular location is the cytoplasm. The catalysed reaction is pseudouridine(1915) in 23S rRNA + S-adenosyl-L-methionine = N(3)-methylpseudouridine(1915) in 23S rRNA + S-adenosyl-L-homocysteine + H(+). In terms of biological role, specifically methylates the pseudouridine at position 1915 (m3Psi1915) in 23S rRNA. This is Ribosomal RNA large subunit methyltransferase H from Pectobacterium atrosepticum (strain SCRI 1043 / ATCC BAA-672) (Erwinia carotovora subsp. atroseptica).